The chain runs to 238 residues: tRNA (guanine-N(7)-)-methyltransferase (238 aa).

Residues glutamate 68, glutamate 93, aspartate 120, and aspartate 143 each coordinate S-adenosyl-L-methionine. Residue aspartate 143 is part of the active site. Substrate-binding positions include lysine 147, aspartate 179, and 216–219 (TKFE).

It belongs to the class I-like SAM-binding methyltransferase superfamily. TrmB family.

The catalysed reaction is guanosine(46) in tRNA + S-adenosyl-L-methionine = N(7)-methylguanosine(46) in tRNA + S-adenosyl-L-homocysteine. Its pathway is tRNA modification; N(7)-methylguanine-tRNA biosynthesis. Catalyzes the formation of N(7)-methylguanine at position 46 (m7G46) in tRNA. The chain is tRNA (guanine-N(7)-)-methyltransferase from Shewanella oneidensis (strain ATCC 700550 / JCM 31522 / CIP 106686 / LMG 19005 / NCIMB 14063 / MR-1).